Consider the following 137-residue polypeptide: Protein Turandot X (137 aa).

The N-terminal stretch at 1-24 (MRVPVFQLSCLLGLIVCLLCSVKA) is a signal peptide.

It belongs to the Turandot family.

It is found in the secreted. Functionally, a humoral factor that may play a role in stress tolerance. The sequence is that of Protein Turandot X from Drosophila pseudoobscura pseudoobscura (Fruit fly).